The chain runs to 252 residues: MKILIAANWKMNKNRLEAKDMIEKLMSMPEGIPPQRDIVLFPPFLAIDTIKEKLKNSTIVIGAQNFYPAPSGAFTGEISLEMLKDVGCSWVLIGHSERRHIIGELPTLIEQKTKLALSYGFSIILCIGETAQEREAGLVNSVLEQQLRTSLTDIPSKAISQLVIAYEPVWAIGTGKVASQQDIITAHTLIRKILHNMIGNTSQNIRILYGGSVNSENASSILELDNVNGLLVGGASLQAESFMKIIHAGFSE.

8–10 contributes to the substrate binding site; sequence NWK. His95 (electrophile) is an active-site residue. Glu167 serves as the catalytic Proton acceptor. Residues Gly173, Ser212, and 233-234 contribute to the substrate site; that span reads GG.

This sequence belongs to the triosephosphate isomerase family. As to quaternary structure, homodimer.

Its subcellular location is the cytoplasm. It catalyses the reaction D-glyceraldehyde 3-phosphate = dihydroxyacetone phosphate. It functions in the pathway carbohydrate biosynthesis; gluconeogenesis. The protein operates within carbohydrate degradation; glycolysis; D-glyceraldehyde 3-phosphate from glycerone phosphate: step 1/1. Its function is as follows. Involved in the gluconeogenesis. Catalyzes stereospecifically the conversion of dihydroxyacetone phosphate (DHAP) to D-glyceraldehyde-3-phosphate (G3P). In Lawsonia intracellularis (strain PHE/MN1-00), this protein is Triosephosphate isomerase.